The following is a 157-amino-acid chain: WPP domain-containing protein 3 (157 aa).

The span at 1 to 20 (MAETADTINTTVSTPQPQLE) shows a compositional bias: polar residues. The tract at residues 1–41 (MAETADTINTTVSTPQPQLESRSDETSCLQKHRSDATSEVT) is disordered. A compositionally biased stretch (basic and acidic residues) spans 32-41 (HRSDATSEVT). The WPP; degenerate stretch occupies residues 37 to 138 (TSEVTKEEKS…IESAEVRFKA (102 aa)).

As to expression, expressed in roots, stems and leaves.

Its subcellular location is the cytoplasm. The protein localises to the nucleus. Its function is as follows. Regulates the mitotic activity in roots. This is WPP domain-containing protein 3 (WPP3) from Arabidopsis thaliana (Mouse-ear cress).